A 965-amino-acid polypeptide reads, in one-letter code: Serine/threonine-protein kinase tousled-like 1 (965 aa).

Disordered regions lie at residues 1-22 (MSML…GGER), 35-72 (PQNK…ATGD), 95-120 (QNSS…TRSS), 172-292 (NHQQ…KQER), 320-402 (QNQG…QSGR), and 538-576 (RKPL…DDAI). Gly residues predominate over residues 10–21 (VAGGGSSSGGGE). Positions 42 to 52 (TVQSSGSSSNH) are enriched in polar residues. Residues 172–231 (NHQQQMQQMHYHQQQQQYQQQQAQHHQMYAPQIQQQQQQPQQQSQQQSAQQPQQSSAALQ) show a composition bias toward low complexity. Composition is skewed to polar residues over residues 233 to 244 (VNESSNLSSAGS) and 320 to 341 (QNQG…SYDS). A compositionally biased stretch (low complexity) spans 342 to 355 (QQQQPQMNQHEMQN). The span at 365–381 (LGVNNRGTPTPTQQQHY) shows a compositional bias: polar residues. Low complexity predominate over residues 382–401 (SSDSNSNSNQSPPGQGNQSG). Positions 552–572 (AVNSQNDSNGMQPSTSSNTNG) are enriched in polar residues. The residue at position 634 (Ser634) is a Phosphoserine. Positions 651-928 (YLMLNLLGKG…VFELAKHELF (278 aa)) constitute a Protein kinase domain. ATP is bound by residues 657–665 (LGKGGFSEV) and Lys680. The active-site Proton acceptor is Asp781.

It belongs to the protein kinase superfamily. Ser/Thr protein kinase family. Interacts with air-2. Autophosphorylates in vitro. Phosphorylation on Ser-634 by air-2 enhances catalytic activity.

It localises to the nucleus. It catalyses the reaction L-seryl-[protein] + ATP = O-phospho-L-seryl-[protein] + ADP + H(+). The catalysed reaction is L-threonyl-[protein] + ATP = O-phospho-L-threonyl-[protein] + ADP + H(+). Functionally, essential for appropriate transcription during embryonic development. May act during transcription elongation to activate the RNA polymerase II large subunit (ama-1) by phosphorylating the Ser-2 residues of the C-terminal domain 7-residue repeats. Does not phosphorylate histone H3. The chain is Serine/threonine-protein kinase tousled-like 1 (tlk-1) from Caenorhabditis elegans.